Reading from the N-terminus, the 65-residue chain is Large ribosomal subunit protein bL35 (65 aa).

It belongs to the bacterial ribosomal protein bL35 family.

This chain is Large ribosomal subunit protein bL35, found in Aromatoleum aromaticum (strain DSM 19018 / LMG 30748 / EbN1) (Azoarcus sp. (strain EbN1)).